A 227-amino-acid polypeptide reads, in one-letter code: UPF0758 protein CPF_2399 (227 aa).

The region spanning 105-227 (KISKPSDVAK…FISLKEKDIL (123 aa)) is the MPN domain. His176, His178, and Asp189 together coordinate Zn(2+). Positions 176–189 (HNHPSGDPTPSRDD) match the JAMM motif motif.

It belongs to the UPF0758 family.

This Clostridium perfringens (strain ATCC 13124 / DSM 756 / JCM 1290 / NCIMB 6125 / NCTC 8237 / Type A) protein is UPF0758 protein CPF_2399.